We begin with the raw amino-acid sequence, 187 residues long: Adenine phosphoribosyltransferase (187 aa).

This sequence belongs to the purine/pyrimidine phosphoribosyltransferase family. In terms of assembly, homodimer.

It localises to the cytoplasm. It catalyses the reaction AMP + diphosphate = 5-phospho-alpha-D-ribose 1-diphosphate + adenine. The protein operates within purine metabolism; AMP biosynthesis via salvage pathway; AMP from adenine: step 1/1. Its function is as follows. Catalyzes a salvage reaction resulting in the formation of AMP, that is energically less costly than de novo synthesis. The protein is Adenine phosphoribosyltransferase of Burkholderia pseudomallei (strain 668).